The following is a 399-amino-acid chain: Acetate kinase (399 aa).

Residue asparagine 10 participates in Mg(2+) binding. An ATP-binding site is contributed by lysine 17. Residue arginine 91 coordinates substrate. The active-site Proton donor/acceptor is aspartate 148. ATP is bound by residues 208 to 212 (HLGNG), 283 to 285 (DCR), and 331 to 335 (GIGEN). Residue glutamate 385 coordinates Mg(2+).

This sequence belongs to the acetokinase family. Homodimer. It depends on Mg(2+) as a cofactor. Mn(2+) is required as a cofactor.

It is found in the cytoplasm. The catalysed reaction is acetate + ATP = acetyl phosphate + ADP. The protein operates within metabolic intermediate biosynthesis; acetyl-CoA biosynthesis; acetyl-CoA from acetate: step 1/2. Catalyzes the formation of acetyl phosphate from acetate and ATP. Can also catalyze the reverse reaction. This Shewanella oneidensis (strain ATCC 700550 / JCM 31522 / CIP 106686 / LMG 19005 / NCIMB 14063 / MR-1) protein is Acetate kinase.